Reading from the N-terminus, the 216-residue chain is GTP:AMP phosphotransferase, mitochondrial (216 aa).

15-20 (GSGKGT) is a GTP binding site. An NMPbind region spans residues 35-64 (STGDILRQNIIKNTELGKKAKQYIAEGKLV). Residues Thr36, Arg41, 62–64 (KLV), 89–92 (GFPR), and Gln96 each bind AMP. Residues 125–162 (NRWIHAPSGRVYNIGFKNPKVPGKDDVTGEPLMQREDD) form an LID region. GTP contacts are provided by residues Arg126 and 135 to 136 (VY). AMP contacts are provided by Arg159 and Arg170. Thr199 contributes to the GTP binding site.

Belongs to the adenylate kinase family. AK3 subfamily. Monomer. In terms of tissue distribution, ubiquitously expressed with highest levels expressed in the abdomen, suggesting a function in muscle tissues.

Its subcellular location is the mitochondrion matrix. It carries out the reaction a ribonucleoside 5'-triphosphate + AMP = a ribonucleoside 5'-diphosphate + ADP. Its function is as follows. Involved in maintaining the homeostasis of cellular nucleotides by catalyzing the interconversion of nucleoside phosphates. Has GTP:AMP phosphotransferase and ITP:AMP phosphotransferase activities. This chain is GTP:AMP phosphotransferase, mitochondrial, found in Drosophila melanogaster (Fruit fly).